The chain runs to 795 residues: Outer membrane protein assembly factor BamA (795 aa).

The N-terminal stretch at 1-19 is a signal peptide; sequence MKKLLIASLLFGTTTTVFA. 5 consecutive POTRA domains span residues 22-89, 90-170, 173-259, 262-341, and 344-418; these read FVAK…VVAK, SIIS…INED, AKLA…VNEG, YDLR…VDAG, and LTVR…VKER.

Belongs to the BamA family. In terms of assembly, part of the Bam complex.

The protein resides in the cell outer membrane. Its function is as follows. Part of the outer membrane protein assembly complex, which is involved in assembly and insertion of beta-barrel proteins into the outer membrane. This chain is Outer membrane protein assembly factor BamA, found in Haemophilus influenzae (strain ATCC 51907 / DSM 11121 / KW20 / Rd).